The primary structure comprises 144 residues: Bacilliredoxin BLi02323/BL05224 (144 aa).

This sequence belongs to the bacilliredoxin family.

The sequence is that of Bacilliredoxin BLi02323/BL05224 from Bacillus licheniformis (strain ATCC 14580 / DSM 13 / JCM 2505 / CCUG 7422 / NBRC 12200 / NCIMB 9375 / NCTC 10341 / NRRL NRS-1264 / Gibson 46).